The sequence spans 479 residues: Solute carrier family 46 member 2 (479 aa).

Topologically, residues 1 to 23 (MGPGGTCPWSSRLSGFRVRTWIE) are cytoplasmic. The helical transmembrane segment at 24–44 (PVVASTQVAGSLYDAGLLLVV) threads the bilayer. Residues 45–80 (KESFKSEAGGSSNYSANQSLVEYQEDQQQKAISNFN) lie on the Extracellular side of the membrane. N-linked (GlcNAc...) asparagine glycans are attached at residues Asn-57 and Asn-61. Residues 81–101 (IIYNLVLGLTPLLSAYGLGWL) form a helical membrane-spanning segment. The Cytoplasmic portion of the chain corresponds to 102-110 (SDRYHRKIS). The helical transmembrane segment at 111 to 131 (ICTAMLGFLLSRIGLLLKVML) threads the bilayer. Over 132–140 (DWPVEVMYG) the chain is Extracellular. The helical transmembrane segment at 141–161 (AAALNGLCGSFSAYWSGVMAL) threads the bilayer. Residues 162–174 (GSLGCSEGRRSVR) are Cytoplasmic-facing. The helical transmembrane segment at 175 to 195 (LILIDLVLGLAGFSGSMASGH) threads the bilayer. Over 196 to 207 (LFKQIVGHSAQG) the chain is Extracellular. Residues 208–228 (LLLTACSVGCAAFALFYSLFV) form a helical membrane-spanning segment. Residues 229-281 (LKVPESKPNKVHPTVDTVSGMMGTYRTLDPDQQDKQNVPRNPRTPGKGKSSQR) are Cytoplasmic-facing. The tract at residues 255 to 277 (TLDPDQQDKQNVPRNPRTPGKGK) is disordered. Residues 282-302 (EVVALLFVGAIIYDLAAVGTV) traverse the membrane as a helical segment. Residues 303–321 (DVMALFVLKEPLHWNQVQL) are Extracellular-facing. A helical transmembrane segment spans residues 322 to 342 (GYGMASGYIIFITSFLGVLVF). Over 343–348 (SRCFRD) the chain is Cytoplasmic. A helical membrane pass occupies residues 349-369 (TTMIIIGMLSFGSGALLLAFV). Residues 370–371 (KE) lie on the Extracellular side of the membrane. The helical transmembrane segment at 372 to 392 (TYMFYIARAIMLFALIPITTI) threads the bilayer. Residues 393–407 (RSAMSKLIKDSSYGK) are Cytoplasmic-facing. A helical transmembrane segment spans residues 408 to 428 (IFVILQLCLTLTGVVTSTIYN). The Extracellular segment spans residues 429-441 (KIYQLTLDKFIGT). Residues 442–462 (CFVLSSFLSFLAIVPIGVVAY) traverse the membrane as a helical segment. At 463–479 (KQVPRSQQGECAEKQRS) the chain is on the cytoplasmic side.

It belongs to the major facilitator superfamily. SLC46A family. Post-translationally, glycosylated. As to expression, expressed on cortical epithelial cells in the thymus. Mainly expressed in the thymic cortex and is highly enriched in SCID thymus. Also expressed in lymph nodes, heart, fetal liver, brain, spleen, intestine and kidney, but not in adult liver, skin, skeletal muscle and lung. Expressed in skin epidermis.

Its subcellular location is the endosome membrane. It is found in the cell membrane. It catalyses the reaction N-acetyl-beta-D-glucosaminyl-(1-&gt;4)-1,6-anhydro-N-acetyl-beta-D-muramoyl-L-alanyl-gamma-D-glutamyl-meso-2,6-diaminopimeloyl-D-alanine(out) + n H(+)(out) = N-acetyl-beta-D-glucosaminyl-(1-&gt;4)-1,6-anhydro-N-acetyl-beta-D-muramoyl-L-alanyl-gamma-D-glutamyl-meso-2,6-diaminopimeloyl-D-alanine(in) + n H(+)(in). It carries out the reaction L-alanyl-gamma-D-glutamyl-meso-2,6-diaminopimelate(out) + n H(+)(out) = L-alanyl-gamma-D-glutamyl-meso-2,6-diaminopimelate(in) + n H(+)(in). The enzyme catalyses N-acetyl-D-muramoyl-L-alanyl-D-isoglutamine(out) + n H(+)(out) = N-acetyl-D-muramoyl-L-alanyl-D-isoglutamine(in) + n H(+)(in). The catalysed reaction is 2',3'-cGAMP(out) + n H(+)(out) = 2',3'-cGAMP(in) + n H(+)(in). It catalyses the reaction 3',3'-cGAMP(out) + n H(+)(out) = 3',3'-cGAMP(in) + n H(+)(in). With respect to regulation, down-regulated by the anti-inflammatory drug methotrexate. Its function is as follows. Proton-coupled transporter that delivers pathogen-associated or danger-associated molecular patterns to cytosolic pattern recognition receptors as part of the innate immune response to microbes or tissue injury. Has selectivity toward muropeptides that contain the amino acid diaminopimelic acid (DAP-type peptidoglycan muropeptides) including Tri-DAP and tracheal toxin (TCT), common in Gram-negative bacteria and Gram-positive bacilli. In the context of immune recognition of skin microbiota, shuttles bacterial muropeptides across the endolysosomal membranes into the cytosol for recognition by NOD1, triggering MYD88-dependent secretion of IL1A and neutrophil recruitment in a pyroptosis-type inflammatory process. To a lesser extent and redundantly, transports muramyl dipeptides derived from most bacterial proteoglycans, eliciting NOD2 receptor activation and downstream inflammatory responses. Postulated to function as an importer of cyclic GMP-AMP dinucleotides (cGAMPs) in monocyte and macrophage cell lineages. Selectively imports cGAMPs derived from pathogenic bacteria such as 3'3'-cGAMP thus providing for differential immune recognition of pathogenic versus commensal bacteria. During tumorigenesis may transport extracellular tumor-derived 2'3'-cGAMP across the plasma membrane of M1-polarized macrophages to activate the anti-tumoral stimulator of interferon genes (STING) pathway. The transport mechanism, its electrogenicity and stoichiometry remain to be elucidated. This Mus musculus (Mouse) protein is Solute carrier family 46 member 2.